We begin with the raw amino-acid sequence, 255 residues long: Proliferating cell nuclear antigen 2 (255 aa).

The DNA-binding element occupies 61 to 80 (HCDRNVSLGLDLKSLGKVLK).

The protein belongs to the PCNA family. As to quaternary structure, homotrimer. Interacts with the catalytic subunits of two DNA polymerase complexes: PolD1 in the delta complex and PolE1/DNApol-epsilon255 in the epsilon complex.

It localises to the nucleus. It is found in the chromosome. The protein localises to the cytoplasm. Its function is as follows. Likely to be an auxiliary protein of DNA polymerase delta complex and is probably involved in the control of DNA replication and repair by increasing the polymerase's processibility. May function independently of PCNA during DNA repair. The polypeptide is Proliferating cell nuclear antigen 2 (Drosophila melanogaster (Fruit fly)).